We begin with the raw amino-acid sequence, 802 residues long: Leucine--tRNA ligase (802 aa).

The 'HIGH' region signature appears at 40-51 (PYPSGAGLHVGH). Positions 576–580 (KMSKS) match the 'KMSKS' region motif. ATP is bound at residue Lys-579.

The protein belongs to the class-I aminoacyl-tRNA synthetase family.

The protein localises to the cytoplasm. It catalyses the reaction tRNA(Leu) + L-leucine + ATP = L-leucyl-tRNA(Leu) + AMP + diphosphate. This Bacillus thuringiensis subsp. konkukian (strain 97-27) protein is Leucine--tRNA ligase.